The following is a 343-amino-acid chain: Putative trace amine-associated receptor 3 (343 aa).

Topologically, residues 1-35 (MDLTYIPEDLSSCPKFVNKILSSHQPLFSCPGDNV) are extracellular. The helical transmembrane segment at 36 to 56 (FGYDWSHDYPLFGNLVIMVSI) threads the bilayer. Residues 57–68 (SHFKQLHSPTNF) are Cytoplasmic-facing. A helical membrane pass occupies residues 69 to 89 (LILSMATTDFLLGFVIMPYSI). Residues 90–150 (MRSVESCWYF…TKMTNSTIKQ (61 aa)) lie on the Extracellular side of the membrane. An intrachain disulfide couples C104 to C189. N145 carries an N-linked (GlcNAc...) asparagine glycan. Residues 151–168 (LLAFCWSVPALFSFGLVL) form a helical membrane-spanning segment. The Cytoplasmic portion of the chain corresponds to 169–172 (SEAD). Residues 173–186 (VSGMQSYKILVACF) are extracellular Loop 2 (ECL2). Residues 173-193 (VSGMQSYKILVACFNFCALTF) traverse the membrane as a helical segment. Residues 194–198 (NKFWG) are Extracellular-facing. Residues 199–223 (TILFTTCFFTPGSIMVGIYGKIFIV) traverse the membrane as a helical segment. The Cytoplasmic portion of the chain corresponds to 224–257 (SKQHARVISHVPENTKGAVKKHLSKKKDRKAAKT). Residues 258–278 (LGIVMGVFLACWLPCFLAVLI) form a helical membrane-spanning segment. At 279 to 287 (DPYLDYSTP) the chain is on the extracellular side. A helical membrane pass occupies residues 288 to 308 (ILILDLLVWLRYFNSTCNPLI). Topologically, residues 309-343 (HGFFNPWFQKAFKYIVSGKIFSSHSETANLFPEAH) are cytoplasmic.

Belongs to the G-protein coupled receptor 1 family. As to expression, not expressed in the pons, thalamus, globus pallidus, caudate, putamen or cerebellum.

It is found in the cell membrane. Its function is as follows. Putative olfactory receptor activated by several primary trace amines. The chain is Putative trace amine-associated receptor 3 from Homo sapiens (Human).